The sequence spans 195 residues: Guanylate kinase (195 aa).

Residues G12–L191 enclose the Guanylate kinase-like domain. Residue G19–G26 participates in ATP binding.

The protein belongs to the guanylate kinase family.

The protein resides in the cytoplasm. The enzyme catalyses GMP + ATP = GDP + ADP. Its function is as follows. Essential for recycling GMP and indirectly, cGMP. In Mycoplasmoides gallisepticum (strain R(low / passage 15 / clone 2)) (Mycoplasma gallisepticum), this protein is Guanylate kinase (gmk).